The sequence spans 134 residues: L-ectoine synthase (134 aa).

It belongs to the ectoine synthase family.

The enzyme catalyses (2S)-4-acetamido-2-aminobutanoate = L-ectoine + H2O. It participates in amine and polyamine biosynthesis; ectoine biosynthesis; L-ectoine from L-aspartate 4-semialdehyde: step 3/3. Functionally, catalyzes the circularization of gamma-N-acetyl-alpha,gamma-diaminobutyric acid (ADABA) to ectoine (1,4,5,6-tetrahydro-2-methyl-4-pyrimidine carboxylic acid), which is an excellent osmoprotectant. This is L-ectoine synthase from Shouchella clausii (strain KSM-K16) (Alkalihalobacillus clausii).